A 325-amino-acid chain; its full sequence is DNA-directed RNA polymerase subunit alpha (325 aa).

Positions 1-231 are alpha N-terminal domain (alpha-NTD); it reads MQTSLLKPKI…DQLSVFAALE (231 aa). An alpha C-terminal domain (alpha-CTD) region spans residues 246-325; that stretch reads IDPILLRPVD…ENWPPAGLDK (80 aa).

Belongs to the RNA polymerase alpha chain family. As to quaternary structure, homodimer. The RNAP catalytic core consists of 2 alpha, 1 beta, 1 beta' and 1 omega subunit. When a sigma factor is associated with the core the holoenzyme is formed, which can initiate transcription.

The enzyme catalyses RNA(n) + a ribonucleoside 5'-triphosphate = RNA(n+1) + diphosphate. In terms of biological role, DNA-dependent RNA polymerase catalyzes the transcription of DNA into RNA using the four ribonucleoside triphosphates as substrates. The protein is DNA-directed RNA polymerase subunit alpha of Burkholderia multivorans (strain ATCC 17616 / 249).